The primary structure comprises 359 residues: Holliday junction branch migration complex subunit RuvB (359 aa).

The segment covering 1-10 has biased composition (basic and acidic residues); the sequence is MPEHDPHQEN. Residues 1 to 20 form a disordered region; the sequence is MPEHDPHQENRTVSSVRLED. Residues 4 to 188 are large ATPase domain (RuvB-L); sequence HDPHQENRTV…FGIPLRLIFY (185 aa). ATP contacts are provided by residues Leu27, Arg28, Gly69, Lys72, Thr73, Thr74, 135-137, Arg178, Tyr188, and Arg225; that span reads EDF. Thr73 is a binding site for Mg(2+). A small ATPAse domain (RuvB-S) region spans residues 189–259; that stretch reads TASELELIVS…TADAALQRLE (71 aa). The segment at 262–359 is head domain (RuvB-H); the sequence is SLGLDAMDRR…LLHRDGSADE (98 aa). DNA-binding residues include Arg298, Arg317, and Arg322.

Belongs to the RuvB family. Homohexamer. Forms an RuvA(8)-RuvB(12)-Holliday junction (HJ) complex. HJ DNA is sandwiched between 2 RuvA tetramers; dsDNA enters through RuvA and exits via RuvB. An RuvB hexamer assembles on each DNA strand where it exits the tetramer. Each RuvB hexamer is contacted by two RuvA subunits (via domain III) on 2 adjacent RuvB subunits; this complex drives branch migration. In the full resolvosome a probable DNA-RuvA(4)-RuvB(12)-RuvC(2) complex forms which resolves the HJ.

The protein localises to the cytoplasm. It catalyses the reaction ATP + H2O = ADP + phosphate + H(+). The RuvA-RuvB-RuvC complex processes Holliday junction (HJ) DNA during genetic recombination and DNA repair, while the RuvA-RuvB complex plays an important role in the rescue of blocked DNA replication forks via replication fork reversal (RFR). RuvA specifically binds to HJ cruciform DNA, conferring on it an open structure. The RuvB hexamer acts as an ATP-dependent pump, pulling dsDNA into and through the RuvAB complex. RuvB forms 2 homohexamers on either side of HJ DNA bound by 1 or 2 RuvA tetramers; 4 subunits per hexamer contact DNA at a time. Coordinated motions by a converter formed by DNA-disengaged RuvB subunits stimulates ATP hydrolysis and nucleotide exchange. Immobilization of the converter enables RuvB to convert the ATP-contained energy into a lever motion, pulling 2 nucleotides of DNA out of the RuvA tetramer per ATP hydrolyzed, thus driving DNA branch migration. The RuvB motors rotate together with the DNA substrate, which together with the progressing nucleotide cycle form the mechanistic basis for DNA recombination by continuous HJ branch migration. Branch migration allows RuvC to scan DNA until it finds its consensus sequence, where it cleaves and resolves cruciform DNA. The sequence is that of Holliday junction branch migration complex subunit RuvB from Granulibacter bethesdensis (strain ATCC BAA-1260 / CGDNIH1).